A 241-amino-acid chain; its full sequence is Ion-translocating oxidoreductase complex subunit E (241 aa).

Transmembrane regions (helical) follow at residues 22–42 (LLGLCPVLAITVNAINAIGLG), 69–89 (IPIYIIIISSVVSSIDLVIKA), 91–111 (AFNLYQSLGIFIPLIITNCIV), 124–144 (VLVSILDGLSIGLGSTLTMFL), 157–177 (LFFGIEHVLGESFRFLYIEVL), and 182–202 (VFLLFAFPSGAFMILGIVLAG).

Belongs to the NqrDE/RnfAE family. As to quaternary structure, the complex is composed of six subunits: RnfA, RnfB, RnfC, RnfD, RnfE and RnfG.

The protein resides in the cell inner membrane. Functionally, part of a membrane-bound complex that couples electron transfer with translocation of ions across the membrane. The chain is Ion-translocating oxidoreductase complex subunit E from Buchnera aphidicola subsp. Baizongia pistaciae (strain Bp).